Reading from the N-terminus, the 395-residue chain is Cysteine synthase 2 (395 aa).

A helical membrane pass occupies residues 6–22; sequence QDLASGIAMGAVFMYLL. The residue at position 83 (lysine 83) is an N6-(pyridoxal phosphate)lysine. Residues 228 to 232 and serine 335 each bind pyridoxal 5'-phosphate; that span reads GTGGT.

Belongs to the cysteine synthase/cystathionine beta-synthase family. Pyridoxal 5'-phosphate is required as a cofactor.

It localises to the mitochondrion. Its subcellular location is the mitochondrion outer membrane. The enzyme catalyses O-acetyl-L-serine + hydrogen sulfide = L-cysteine + acetate. Its function is as follows. Putative cysteine synthase that catalyzes the conversion of O-acetyl-L-serine (OAS) into cysteine, the last step in the cysteine biosynthesis pathway. However, in contrast to cysteine synthase cys11, this CS-like protein seems not to function in cysteine biosynthesis, at least under normal growth conditions, although the transcript is produced. The chain is Cysteine synthase 2 (cys12) from Schizosaccharomyces pombe (strain 972 / ATCC 24843) (Fission yeast).